We begin with the raw amino-acid sequence, 116 residues long: NADH-quinone oxidoreductase subunit A (116 aa).

3 helical membrane-spanning segments follow: residues 3 to 23 (FTLL…VIAL), 61 to 81 (FAIL…WAVI), and 88 to 108 (QGLI…AYAW).

Belongs to the complex I subunit 3 family. NDH-1 is composed of 14 different subunits. Subunits NuoA, H, J, K, L, M, N constitute the membrane sector of the complex.

The protein localises to the cell inner membrane. The enzyme catalyses a quinone + NADH + 5 H(+)(in) = a quinol + NAD(+) + 4 H(+)(out). Its function is as follows. NDH-1 shuttles electrons from NADH, via FMN and iron-sulfur (Fe-S) centers, to quinones in the respiratory chain. The immediate electron acceptor for the enzyme in this species is believed to be a menaquinone. Couples the redox reaction to proton translocation (for every two electrons transferred, four hydrogen ions are translocated across the cytoplasmic membrane), and thus conserves the redox energy in a proton gradient. In Bacteroides fragilis (strain ATCC 25285 / DSM 2151 / CCUG 4856 / JCM 11019 / LMG 10263 / NCTC 9343 / Onslow / VPI 2553 / EN-2), this protein is NADH-quinone oxidoreductase subunit A.